A 229-amino-acid polypeptide reads, in one-letter code: Deleted in azoospermia-like (229 aa).

The 82-residue stretch at 47–128 (NTLFVGGIDM…PAIMKERSSR (82 aa)) folds into the RRM domain. A DAZ domain is found at 172 to 198 (PYSYSSPPGIMVPQVPMNYAQTTYAYQ).

The protein belongs to the RRM DAZ family. In terms of tissue distribution, testis and ovary specific. In ovary, it is localized in the cortex of oocytes. At the onset of embryogenesis, maternal product is located at the vegetal pole, before migrating toward blastomeres through cytoplasmic streams as early embryogenesis proceededs.

The protein localises to the cytoplasm. RNA-binding protein involved in gametogenesis in both males and females. Acts by binding to the 3'-UTR of mRNA, specifically recognizing GUU triplets, and promoting the translation of key transcripts. Establishes oocyte polarity through interaction with Bucky ball (BUC). Interacts with Bucky ball (BUC) mRNA to mediate Balbiani body formation and oocyte polarity during early oogenesis. The protein is Deleted in azoospermia-like (dazl) of Danio rerio (Zebrafish).